We begin with the raw amino-acid sequence, 313 residues long: MAQETTRDGSDSPSGSVSPPIANGTNNKKDKKSSKKRAHSSGERRSSVSKPARDPSDKPEESPSKKKKRKTTSSTAAAAVPSTITEEVSPSTSVTRSPSPVIDFDGLSRPSRGTRERLEETEAQKQERLDKMKGAVRTLLECIGEDPDREGLLATPERYAKAMLFLTKGYQENVRDIVNGAIFQEGHNEMVIVKDIEVFSMCEHHLVPFTGKMHIGYIPSNAVIGISKLPRIAELFARRLQIQERLTKEVANAIMEILKPQGVAVVMESSHLCMVMRGVQKTTSSTITSCVLGCFESREKTRLEFLSLIGVNR.

Residues 1 to 10 show a composition bias toward basic and acidic residues; that stretch reads MAQETTRDGS. The tract at residues 1–120 is disordered; that stretch reads MAQETTRDGS…SRGTRERLEE (120 aa). The span at 11–20 shows a compositional bias: low complexity; it reads DSPSGSVSPP. A compositionally biased stretch (basic residues) spans 29–39; sequence KDKKSSKKRAH. Over residues 40-64 the composition is skewed to basic and acidic residues; that stretch reads SSGERRSSVSKPARDPSDKPEESPS. Residues 72–102 show a composition bias toward low complexity; it reads TSSTAAAAVPSTITEEVSPSTSVTRSPSPVI. 3 residues coordinate Zn(2+): C202, H205, and C273.

The protein belongs to the GTP cyclohydrolase I family. Toroid-shaped homodecamer, composed of two pentamers of five dimers.

The catalysed reaction is GTP + H2O = 7,8-dihydroneopterin 3'-triphosphate + formate + H(+). The protein operates within cofactor biosynthesis; 7,8-dihydroneopterin triphosphate biosynthesis; 7,8-dihydroneopterin triphosphate from GTP: step 1/1. With respect to regulation, GTP shows a positive allosteric effect, and tetrahydrobiopterin inhibits the enzyme activity. GTP cyclohydrolase 1 is the first enzyme in the biosynthetic pathway leading to folic acid. The protein is GTP cyclohydrolase 1 (gch-1) of Neurospora crassa (strain ATCC 24698 / 74-OR23-1A / CBS 708.71 / DSM 1257 / FGSC 987).